Reading from the N-terminus, the 306-residue chain is Putative type I specificity subunit S.MpnORF285P (306 aa).

It belongs to the type-I restriction system S methylase family. As to quaternary structure, the methyltransferase is composed of M and S polypeptides.

The specificity (S) subunit of a type I methyltransferase (MTase); this subunit dictates DNA sequence specificity. The single R subunit has multiple frameshifts and is probably not expressed. In Mycoplasma pneumoniae (strain ATCC 29342 / M129 / Subtype 1) (Mycoplasmoides pneumoniae), this protein is Putative type I specificity subunit S.MpnORF285P.